The following is a 199-amino-acid chain: N-(5'-phosphoribosyl)anthranilate isomerase (199 aa).

The protein belongs to the TrpF family.

The catalysed reaction is N-(5-phospho-beta-D-ribosyl)anthranilate = 1-(2-carboxyphenylamino)-1-deoxy-D-ribulose 5-phosphate. It functions in the pathway amino-acid biosynthesis; L-tryptophan biosynthesis; L-tryptophan from chorismate: step 3/5. The protein is N-(5'-phosphoribosyl)anthranilate isomerase of Streptococcus pneumoniae serotype 19F (strain G54).